Here is an 845-residue protein sequence, read N- to C-terminus: Tyrosine-protein phosphatase corkscrew (845 aa).

SH2 domains are found at residues W6–L101 and W111–F205. The region spanning F227–Y645 is the Tyrosine-protein phosphatase domain. The interval I289–T444 is PTPase insert (Cys/Ser-rich). A disordered region spans residues S362–N402. Low complexity-rich tracts occupy residues S369 to G378 and T388 to P400. S419 is modified (phosphoserine). Residues D545, C583 to R589, and Q630 contribute to the substrate site. C583 serves as the catalytic Phosphocysteine intermediate. The tract at residues D793–G824 is disordered.

Belongs to the protein-tyrosine phosphatase family. Non-receptor class subfamily. As to quaternary structure, interacts with drpr isoform A. As to expression, expressed uniformly throughout all tissues during embryogenesis.

It localises to the cytoplasm. The enzyme catalyses O-phospho-L-tyrosyl-[protein] + H2O = L-tyrosyl-[protein] + phosphate. Functionally, required in all receptor tyrosine kinase signaling pathways. Functions downstream of the receptor tyrosine kinase torso, acting in concert with D-Raf via tailless. Also functions downstream of Egfr (epidermal growth factor receptor) and btl (fibroblast growth factor receptor). The SH2 domain suggests that csw effects its role by mediating heteromeric protein interactions. Maternally required for normal determination of cell fates at the termini of the embryo. Required for cell fate specification of the ventral ectoderm, in the developing embryonic CNS and for embryonic tracheal cell migration. Functions during imaginal development for proper formation of adult structures such as eyes, aristae, L5 wing vein and the tarsal claw. Dephosphorylates drpr isoform A which is required for the inhibition by drpr isoform A of glial cell engulfment of axonal debris produced following axonal injury. The chain is Tyrosine-protein phosphatase corkscrew (csw) from Drosophila melanogaster (Fruit fly).